We begin with the raw amino-acid sequence, 122 residues long: Large ribosomal subunit protein uL14 (122 aa).

This sequence belongs to the universal ribosomal protein uL14 family. Part of the 50S ribosomal subunit. Forms a cluster with proteins L3 and L19. In the 70S ribosome, L14 and L19 interact and together make contacts with the 16S rRNA in bridges B5 and B8.

Its function is as follows. Binds to 23S rRNA. Forms part of two intersubunit bridges in the 70S ribosome. This is Large ribosomal subunit protein uL14 from Mycobacterium tuberculosis (strain ATCC 25177 / H37Ra).